We begin with the raw amino-acid sequence, 31 residues long: Cytochrome b6-f complex subunit 6 (31 aa).

A helical membrane pass occupies residues 4–26; that stretch reads LTSYFGFLLAALTITSALFIGLN.

This sequence belongs to the PetL family. In terms of assembly, the 4 large subunits of the cytochrome b6-f complex are cytochrome b6, subunit IV (17 kDa polypeptide, PetD), cytochrome f and the Rieske protein, while the 4 small subunits are PetG, PetL, PetM and PetN. The complex functions as a dimer.

The protein resides in the plastid. It is found in the chloroplast thylakoid membrane. In terms of biological role, component of the cytochrome b6-f complex, which mediates electron transfer between photosystem II (PSII) and photosystem I (PSI), cyclic electron flow around PSI, and state transitions. PetL is important for photoautotrophic growth as well as for electron transfer efficiency and stability of the cytochrome b6-f complex. This is Cytochrome b6-f complex subunit 6 from Blitum bonus-henricus (Good King Henry).